The following is a 486-amino-acid chain: Pup--protein ligase (486 aa).

Mg(2+) is bound at residue glutamate 33. Residue arginine 76 coordinates ATP. Tyrosine 78 contacts Mg(2+). Aspartate 80 acts as the Proton acceptor in catalysis. Position 86 (glutamate 86) interacts with Mg(2+). Residues threonine 89 and tryptophan 451 each coordinate ATP.

Belongs to the Pup ligase/Pup deamidase family. Pup-conjugating enzyme subfamily.

It catalyses the reaction ATP + [prokaryotic ubiquitin-like protein]-L-glutamate + [protein]-L-lysine = ADP + phosphate + N(6)-([prokaryotic ubiquitin-like protein]-gamma-L-glutamyl)-[protein]-L-lysine.. Its pathway is protein degradation; proteasomal Pup-dependent pathway. It functions in the pathway protein modification; protein pupylation. In terms of biological role, catalyzes the covalent attachment of the prokaryotic ubiquitin-like protein modifier Pup to the proteasomal substrate proteins, thereby targeting them for proteasomal degradation. This tagging system is termed pupylation. The ligation reaction involves the side-chain carboxylate of the C-terminal glutamate of Pup and the side-chain amino group of a substrate lysine. The sequence is that of Pup--protein ligase from Bifidobacterium longum (strain NCC 2705).